We begin with the raw amino-acid sequence, 352 residues long: DNA polymerase IV (352 aa).

Residues 6 to 187 (IIHIDCDCFY…LPVSKLHGVG (182 aa)) form the UmuC domain. Residues Asp10 and Asp105 each contribute to the Mg(2+) site. Glu106 is an active-site residue.

Belongs to the DNA polymerase type-Y family. As to quaternary structure, monomer. The cofactor is Mg(2+).

Its subcellular location is the cytoplasm. It catalyses the reaction DNA(n) + a 2'-deoxyribonucleoside 5'-triphosphate = DNA(n+1) + diphosphate. Its function is as follows. Poorly processive, error-prone DNA polymerase involved in untargeted mutagenesis. Copies undamaged DNA at stalled replication forks, which arise in vivo from mismatched or misaligned primer ends. These misaligned primers can be extended by PolIV. Exhibits no 3'-5' exonuclease (proofreading) activity. May be involved in translesional synthesis, in conjunction with the beta clamp from PolIII. This Ectopseudomonas mendocina (strain ymp) (Pseudomonas mendocina) protein is DNA polymerase IV.